A 268-amino-acid chain; its full sequence is Octanoyltransferase (268 aa).

One can recognise a BPL/LPL catalytic domain in the interval 47–243 (PETPDQVWLV…ALCEVLAAHE (197 aa)). Substrate contacts are provided by residues 87 to 94 (RGGQITYH), 159 to 161 (ALG), and 172 to 174 (GVS). C190 serves as the catalytic Acyl-thioester intermediate.

It belongs to the LipB family.

The protein localises to the cytoplasm. It carries out the reaction octanoyl-[ACP] + L-lysyl-[protein] = N(6)-octanoyl-L-lysyl-[protein] + holo-[ACP] + H(+). The protein operates within protein modification; protein lipoylation via endogenous pathway; protein N(6)-(lipoyl)lysine from octanoyl-[acyl-carrier-protein]: step 1/2. Its function is as follows. Catalyzes the transfer of endogenously produced octanoic acid from octanoyl-acyl-carrier-protein onto the lipoyl domains of lipoate-dependent enzymes. Lipoyl-ACP can also act as a substrate although octanoyl-ACP is likely to be the physiological substrate. This Cupriavidus necator (strain ATCC 17699 / DSM 428 / KCTC 22496 / NCIMB 10442 / H16 / Stanier 337) (Ralstonia eutropha) protein is Octanoyltransferase.